Reading from the N-terminus, the 415-residue chain is Serine hydroxymethyltransferase 2 (415 aa).

(6S)-5,6,7,8-tetrahydrofolate-binding positions include Leu121 and 125–127; that span reads GHL. Lys229 is subject to N6-(pyridoxal phosphate)lysine.

The protein belongs to the SHMT family. As to quaternary structure, homodimer. It depends on pyridoxal 5'-phosphate as a cofactor.

The protein resides in the cytoplasm. The enzyme catalyses (6R)-5,10-methylene-5,6,7,8-tetrahydrofolate + glycine + H2O = (6S)-5,6,7,8-tetrahydrofolate + L-serine. Its pathway is one-carbon metabolism; tetrahydrofolate interconversion. The protein operates within amino-acid biosynthesis; glycine biosynthesis; glycine from L-serine: step 1/1. In terms of biological role, catalyzes the reversible interconversion of serine and glycine with tetrahydrofolate (THF) serving as the one-carbon carrier. This reaction serves as the major source of one-carbon groups required for the biosynthesis of purines, thymidylate, methionine, and other important biomolecules. Also exhibits THF-independent aldolase activity toward beta-hydroxyamino acids, producing glycine and aldehydes, via a retro-aldol mechanism. This Bordetella parapertussis (strain 12822 / ATCC BAA-587 / NCTC 13253) protein is Serine hydroxymethyltransferase 2.